The following is a 330-amino-acid chain: Phenylalanine--tRNA ligase alpha subunit (330 aa).

E255 contributes to the Mg(2+) binding site.

This sequence belongs to the class-II aminoacyl-tRNA synthetase family. Phe-tRNA synthetase alpha subunit type 1 subfamily. In terms of assembly, tetramer of two alpha and two beta subunits. Requires Mg(2+) as cofactor.

The protein localises to the cytoplasm. The enzyme catalyses tRNA(Phe) + L-phenylalanine + ATP = L-phenylalanyl-tRNA(Phe) + AMP + diphosphate + H(+). The protein is Phenylalanine--tRNA ligase alpha subunit of Acinetobacter baumannii (strain AYE).